The primary structure comprises 137 residues: Hydrogenase-4 component J (137 aa).

To E.coli HycH.

Possible component of hydrogenase 4. This chain is Hydrogenase-4 component J, found in Escherichia coli (strain K12).